We begin with the raw amino-acid sequence, 175 residues long: 3-hydroxydecanoyl-[acyl-carrier-protein] dehydratase (175 aa).

His71 is an active-site residue.

It belongs to the thioester dehydratase family. FabA subfamily. In terms of assembly, homodimer.

It is found in the cytoplasm. It catalyses the reaction a (3R)-hydroxyacyl-[ACP] = a (2E)-enoyl-[ACP] + H2O. The catalysed reaction is (3R)-hydroxydecanoyl-[ACP] = (2E)-decenoyl-[ACP] + H2O. The enzyme catalyses (2E)-decenoyl-[ACP] = (3Z)-decenoyl-[ACP]. It participates in lipid metabolism; fatty acid biosynthesis. Functionally, necessary for the introduction of cis unsaturation into fatty acids. Catalyzes the dehydration of (3R)-3-hydroxydecanoyl-ACP to E-(2)-decenoyl-ACP and then its isomerization to Z-(3)-decenoyl-ACP. Can catalyze the dehydratase reaction for beta-hydroxyacyl-ACPs with saturated chain lengths up to 16:0, being most active on intermediate chain length. The chain is 3-hydroxydecanoyl-[acyl-carrier-protein] dehydratase from Rhodopseudomonas palustris (strain ATCC BAA-98 / CGA009).